The primary structure comprises 381 residues: N-acetyl-alpha-D-glucosaminyl L-malate synthase (381 aa).

Residues serine 16, tyrosine 94, and threonine 122 each contribute to the (S)-malate site. UDP is bound by residues asparagine 206, glutamine 262, and glutamate 290.

Belongs to the glycosyltransferase group 1 family. Glycosyltransferase 4 subfamily. As to quaternary structure, dimer of tetramers.

It catalyses the reaction (S)-malate + UDP-N-acetyl-alpha-D-glucosamine = (S)-malyl N-acetyl-alpha-D-glucosaminide + UDP + H(+). Its function is as follows. Involved in bacillithiol (BSH) biosynthesis. Catalyzes the first step of the pathway, the formation of N-acetylglucosaminylmalate (GlcNAc-Mal) from UDP-N-acetylglucosamine (UDP-GlcNAc) and L-malate. The sequence is that of N-acetyl-alpha-D-glucosaminyl L-malate synthase from Bacillus anthracis.